The chain runs to 155 residues: Trypsin/factor XIIA inhibitor (155 aa).

The signal sequence occupies residues 1-28; sequence MASSSSSSHRRLILAAAVLLSVLAAASA. 5 disulfide bridges follow: Cys34–Cys83, Cys48–Cys72, Cys57–Cys114, Cys73–Cys132, and Cys85–Cys143. Arg62 is a catalytic residue. Positions 139–155 are cleaved as a propeptide — C-terminal peptide; the sequence is GVAECPWILGGGTMPSK.

The protein belongs to the protease inhibitor I6 (cereal trypsin/alpha-amylase inhibitor) family. As to quaternary structure, monomer.

It is found in the secreted. Functionally, potent inhibitor of mammalian trypsin and a specific inhibitor of factor XIIa (activated hageman factor). The protein is Trypsin/factor XIIA inhibitor of Zea mays (Maize).